The following is a 164-amino-acid chain: uncharacterized protein (164 aa).

The protein localises to the mitochondrion. This is an uncharacterized protein from Arabidopsis thaliana (Mouse-ear cress).